The following is a 911-amino-acid chain: Leucine--tRNA ligase (911 aa).

The short motif at 42–52 (PYPSGKLHMGH) is the 'HIGH' region element. The short motif at 659 to 663 (TMSKS) is the 'KMSKS' region element. Lysine 662 is a binding site for ATP.

It belongs to the class-I aminoacyl-tRNA synthetase family.

Its subcellular location is the cytoplasm. It catalyses the reaction tRNA(Leu) + L-leucine + ATP = L-leucyl-tRNA(Leu) + AMP + diphosphate. This is Leucine--tRNA ligase from Delftia acidovorans (strain DSM 14801 / SPH-1).